Consider the following 263-residue polypeptide: SPRY domain-containing SOCS box protein 2 (263 aa).

Over residues M1–P16 the composition is skewed to polar residues. The segment at M1 to W48 is disordered. Residues P26 to R221 form the B30.2/SPRY domain. Residues A222–Q263 form the SOCS box domain.

Belongs to the SPSB family. In terms of assembly, component of the probable ECS(SPSB2) E3 ubiquitin-protein ligase complex which contains CUL5, RNF7/RBX2, Elongin BC complex and SPSB2. Interacts with CUL5, RNF7, ELOB and ELOC. Interacts with MET. Interacts (via B30.2/SPRY domain) with PAWR; this interaction occurs in association with the Elongin BC complex. Interacts with NOS2. (Microbial infection) Interacts (via C-terminus) with HCV envelope glycoprotein E1. Interacts (via C-terminus) with HCV non-structural protein 5A; this interaction targets NS5A for ubiquitination and degradation.

It localises to the cytoplasm. The protein resides in the cytosol. It functions in the pathway protein modification; protein ubiquitination. Its function is as follows. Substrate recognition component of a SCF-like ECS (Elongin BC-CUL2/5-SOCS-box protein) E3 ubiquitin-protein ligase complex which mediates the ubiquitination and subsequent proteasomal degradation of target proteins. Negatively regulates nitric oxide (NO) production and limits cellular toxicity in activated macrophages by mediating the ubiquitination and proteasomal degradation of NOS2. Acts as a bridge which links NOS2 with the ECS E3 ubiquitin ligase complex components ELOC and CUL5. The protein is SPRY domain-containing SOCS box protein 2 (SPSB2) of Homo sapiens (Human).